The following is a 217-amino-acid chain: Probable transaldolase (217 aa).

The active-site Schiff-base intermediate with substrate is K83.

Belongs to the transaldolase family. Type 3B subfamily.

It is found in the cytoplasm. It carries out the reaction D-sedoheptulose 7-phosphate + D-glyceraldehyde 3-phosphate = D-erythrose 4-phosphate + beta-D-fructose 6-phosphate. Its pathway is carbohydrate degradation; pentose phosphate pathway; D-glyceraldehyde 3-phosphate and beta-D-fructose 6-phosphate from D-ribose 5-phosphate and D-xylulose 5-phosphate (non-oxidative stage): step 2/3. Its function is as follows. Transaldolase is important for the balance of metabolites in the pentose-phosphate pathway. In Fervidobacterium nodosum (strain ATCC 35602 / DSM 5306 / Rt17-B1), this protein is Probable transaldolase.